The following is a 405-amino-acid chain: Deoxyguanosinetriphosphate triphosphohydrolase-like protein (405 aa).

Residues 75–219 (RLTHTIEVAQ…AAVADDIAYN (145 aa)) form the HD domain.

Belongs to the dGTPase family. Type 2 subfamily.

The sequence is that of Deoxyguanosinetriphosphate triphosphohydrolase-like protein from Allorhizobium ampelinum (strain ATCC BAA-846 / DSM 112012 / S4) (Agrobacterium vitis (strain S4)).